We begin with the raw amino-acid sequence, 450 residues long: Na(+)/H(+) antiporter NhaA (450 aa).

11 consecutive transmembrane segments (helical) span residues 24 to 44 (FFAI…LALV), 75 to 95 (LILW…GLEI), 111 to 131 (ALPI…YLAL), 140 to 160 (GWGV…SLLG), 169 to 189 (VFLT…IAFF), 196 to 216 (FSFL…NWLG), 224 to 244 (LLVG…ATIA), 318 to 338 (WVAW…TVSA), 352 to 372 (IFFG…WLLV), 390 to 410 (GIGW…TLAF), and 422 to 442 (SILC…RVLL).

Belongs to the NhaA Na(+)/H(+) (TC 2.A.33) antiporter family.

It localises to the cell inner membrane. It catalyses the reaction Na(+)(in) + 2 H(+)(out) = Na(+)(out) + 2 H(+)(in). Na(+)/H(+) antiporter that extrudes sodium in exchange for external protons. This is Na(+)/H(+) antiporter NhaA from Oleidesulfovibrio alaskensis (strain ATCC BAA-1058 / DSM 17464 / G20) (Desulfovibrio alaskensis).